A 350-amino-acid chain; its full sequence is Pleckstrin (350 aa).

Positions 4–101 (KRIREGYLVK…WVRDIKKAIK (98 aa)) constitute a PH 1 domain. Lys-64 bears the N6-acetyllysine mark. Phosphoserine; by PKC is present on residues Ser-113 and Ser-117. Residues 136–221 (TEKGIKELNL…NPDAFYYFPD (86 aa)) enclose the DEP domain. The PH 2 domain occupies 244–347 (VIIKQGCLLK…WIRAIQMASR (104 aa)).

Its function is as follows. Major protein kinase C substrate of platelets. The polypeptide is Pleckstrin (PLEK) (Homo sapiens (Human)).